The primary structure comprises 584 residues: Pentalenolactone D synthase (584 aa).

FAD is bound by residues 55-56 (IG), 77-78 (DG), 85-86 (TW), 97-98 (DV), Y103, V147, and M486.

It belongs to the FAD-binding monooxygenase family. Requires FAD as cofactor.

It carries out the reaction 1-deoxy-11-oxopentalenate + NADPH + O2 + H(+) = pentalenolactone D + NADP(+) + H2O. It functions in the pathway antibiotic biosynthesis; pentalenolactone biosynthesis. Its function is as follows. Catalyzes the flavin-dependent Baeyer-Villiger oxidation of 1-deoxy-11-oxopentalenic acid to pentalenolactone D in the biosynthesis of pentalenolactone antibiotic. In Streptomyces exfoliatus (Streptomyces hydrogenans), this protein is Pentalenolactone D synthase (penE).